The chain runs to 97 residues: Large ribosomal subunit protein uL23 (97 aa).

The protein belongs to the universal ribosomal protein uL23 family. Part of the 50S ribosomal subunit. Contacts protein L29, and trigger factor when it is bound to the ribosome.

Functionally, one of the early assembly proteins it binds 23S rRNA. One of the proteins that surrounds the polypeptide exit tunnel on the outside of the ribosome. Forms the main docking site for trigger factor binding to the ribosome. The chain is Large ribosomal subunit protein uL23 from Brucella canis (strain ATCC 23365 / NCTC 10854 / RM-666).